A 206-amino-acid polypeptide reads, in one-letter code: Guanylate kinase (206 aa).

Residues 6–184 (GTLYIISAPS…ALDDLKAIFR (179 aa)) form the Guanylate kinase-like domain. 13-20 (APSGAGKS) provides a ligand contact to ATP.

It belongs to the guanylate kinase family.

It is found in the cytoplasm. It carries out the reaction GMP + ATP = GDP + ADP. Functionally, essential for recycling GMP and indirectly, cGMP. The protein is Guanylate kinase of Pseudomonas fluorescens (strain Pf0-1).